The sequence spans 238 residues: Putative type I specificity subunit S.MpnORF201P (238 aa).

The protein belongs to the type-I restriction system S methylase family. The methyltransferase is composed of M and S polypeptides.

Its function is as follows. The specificity (S) subunit of a type I methyltransferase (MTase); this subunit dictates DNA sequence specificity. The single R subunit has multiple frameshifts and is probably not expressed. The chain is Putative type I specificity subunit S.MpnORF201P from Mycoplasma pneumoniae (strain ATCC 29342 / M129 / Subtype 1) (Mycoplasmoides pneumoniae).